The chain runs to 186 residues: Probable GTP-binding protein EngB (186 aa).

An EngB-type G domain is found at 18–186 (DKKEICFIGR…LKKLIGSVIL (169 aa)). Residues 26–33 (GRSNVGKS), 52–56 (GRTQL), 69–72 (DLPG), 135–138 (NKAD), and 166–168 (VSA) each bind GTP. The Mg(2+) site is built by Ser-33 and Thr-54.

The protein belongs to the TRAFAC class TrmE-Era-EngA-EngB-Septin-like GTPase superfamily. EngB GTPase family. Requires Mg(2+) as cofactor.

Its function is as follows. Necessary for normal cell division and for the maintenance of normal septation. This is Probable GTP-binding protein EngB from Malacoplasma penetrans (strain HF-2) (Mycoplasma penetrans).